A 329-amino-acid chain; its full sequence is Thioredoxin domain-containing protein 6 (329 aa).

Residues 11 to 115 (QVNINTQELW…QKTILQQLEA (105 aa)) form the Thioredoxin domain. The segment at 157 to 303 (GKTCTLGIIK…LFPSFKFSDK (147 aa)) is NDK. The segment at 303 to 329 (KDKEAPPGAEAQTMVGPVEDPCMSERI) is disordered.

This sequence belongs to the NDK family. Monomer and homodimer. As to expression, expressed in lung airway epithelium (at protein level).

The protein localises to the cytoplasm. The protein resides in the cytoskeleton. Its subcellular location is the cilium axoneme. It is found in the dynein axonemal particle. Its function is as follows. May be a regulator of microtubule physiology. The sequence is that of Thioredoxin domain-containing protein 6 from Mus musculus (Mouse).